Here is a 205-residue protein sequence, read N- to C-terminus: Type III pantothenate kinase (205 aa).

Residue 5 to 12 coordinates ATP; the sequence is DIGNTTYH. Residues Y68 and 72–75 contribute to the substrate site; that span reads GIDR. D74 functions as the Proton acceptor in the catalytic mechanism. Residue D89 participates in K(+) binding. S92 provides a ligand contact to ATP. A substrate-binding site is contributed by S144.

This sequence belongs to the type III pantothenate kinase family. Homodimer. NH4(+) serves as cofactor. It depends on K(+) as a cofactor.

The protein localises to the cytoplasm. It catalyses the reaction (R)-pantothenate + ATP = (R)-4'-phosphopantothenate + ADP + H(+). Its pathway is cofactor biosynthesis; coenzyme A biosynthesis; CoA from (R)-pantothenate: step 1/5. Its function is as follows. Catalyzes the phosphorylation of pantothenate (Pan), the first step in CoA biosynthesis. This Sulfurimonas denitrificans (strain ATCC 33889 / DSM 1251) (Thiomicrospira denitrificans (strain ATCC 33889 / DSM 1251)) protein is Type III pantothenate kinase.